A 694-amino-acid polypeptide reads, in one-letter code: ATP-binding cassette sub-family G member 8 (694 aa).

Over 1–437 (MAEKTKEETQ…ISNDFRDLPT (437 aa)) the chain is Cytoplasmic. The region spanning 91–335 (AQFKLPWRSR…FTSIGYPCPR (245 aa)) is the ABC transporter domain. In terms of domain architecture, ABC transmembrane type-2 spans 436-684 (PTLFIHGAEA…FLSLYYLSLK (249 aa)). The helical transmembrane segment at 438 to 458 (LFIHGAEACLMSLIIGFLYYG) threads the bilayer. Residues 459-468 (HADKPLSFMD) are Extracellular-facing. A helical membrane pass occupies residues 469 to 489 (MAALLFMIGALIPFNVILDVV). Topologically, residues 490–518 (SKCHSERSLLYYELEDGLYTAGPYFFAKV) are cytoplasmic. The helical transmembrane segment at 519-539 (LGELPEHCAYVIIYGMPIYWL) threads the bilayer. Residues 540–548 (TNLRPGPEL) lie on the Extracellular side of the membrane. The chain crosses the membrane as a helical span at residues 549-569 (FLLHFMLLWLVVFCCRTMALA). Residues 570–576 (ASAMLPT) are Cytoplasmic-facing. Residues 577–597 (FHMSSFCCNALYNSFYLTAGF) form a helical membrane-spanning segment. Residues 598-660 (MINLNNLWIV…VTAMDLNSHP (63 aa)) are Extracellular-facing. Residue asparagine 640 is glycosylated (N-linked (GlcNAc...) asparagine). A helical membrane pass occupies residues 661 to 681 (LYAIYLIVIGISCGFLSLYYL). The Cytoplasmic portion of the chain corresponds to 682–694 (SLKFIKQKSIQDW).

Belongs to the ABC transporter superfamily. ABCG family. Eye pigment precursor importer (TC 3.A.1.204) subfamily. In terms of assembly, heterodimer with ABCG8. It depends on Mg(2+) as a cofactor. N-glycosylated. N-glycosylation is important for efficient export out of the endoplasmic reticulum. In terms of tissue distribution, highest expression in liver, with lower levels in small intestine and colon.

Its subcellular location is the cell membrane. The protein resides in the apical cell membrane. The enzyme catalyses cholesterol(in) + ATP + H2O = cholesterol(out) + ADP + phosphate + H(+). The catalysed reaction is sitosterol(in) + ATP + H2O = sitosterol(out) + ADP + phosphate + H(+). Its function is as follows. ABCG5 and ABCG8 form an obligate heterodimer that mediates Mg(2+)- and ATP-dependent sterol transport across the cell membrane. Plays an essential role in the selective transport of the dietary cholesterol in and out of the enterocytes and in the selective sterol excretion by the liver into bile. Required for normal sterol homeostasis. The heterodimer with ABCG5 has ATPase activity. The polypeptide is ATP-binding cassette sub-family G member 8 (Rattus norvegicus (Rat)).